The sequence spans 66 residues: Protein I177L (66 aa).

The protein belongs to the asfivirus I177L family.

The protein resides in the virion. The polypeptide is Protein I177L (Ornithodoros (relapsing fever ticks)).